Consider the following 556-residue polypeptide: Formate--tetrahydrofolate ligase (556 aa).

An ATP-binding site is contributed by 65 to 72 (TPAGEGKS).

Belongs to the formate--tetrahydrofolate ligase family.

It catalyses the reaction (6S)-5,6,7,8-tetrahydrofolate + formate + ATP = (6R)-10-formyltetrahydrofolate + ADP + phosphate. It functions in the pathway one-carbon metabolism; tetrahydrofolate interconversion. This chain is Formate--tetrahydrofolate ligase, found in Streptococcus thermophilus (strain ATCC BAA-250 / LMG 18311).